Here is a 798-residue protein sequence, read N- to C-terminus: Disintegrin and metalloproteinase domain-containing protein B (798 aa).

Positions Met1–Ala23 are cleaved as a signal peptide. Residues Ser24–Pro706 lie on the Extracellular side of the membrane. 5 N-linked (GlcNAc...) asparagine glycosylation sites follow: Asn32, Asn226, Asn227, Asn313, and Asn407. Residues Lys271–Thr510 form the Peptidase M12B domain. Intrachain disulfides connect Cys395-Cys495, Cys448-Cys459, and Cys580-Cys600. A Zn(2+)-binding site is contributed by His431. Glu432 is an active-site residue. Zn(2+)-binding residues include His435 and His441. The Disintegrin domain maps to Gly519–Asp608. Residues Ile707–Ile727 form a helical membrane-spanning segment. Residues Cys728 to Ala798 lie on the Cytoplasmic side of the membrane. Residues Gln734–Ala798 are disordered. The span at Asn775–Met792 shows a compositional bias: pro residues.

Zn(2+) serves as cofactor.

The protein resides in the membrane. Its function is as follows. Probable zinc protease. This Trichophyton verrucosum (strain HKI 0517) protein is Disintegrin and metalloproteinase domain-containing protein B (ADM-B).